The primary structure comprises 510 residues: 2,3-bisphosphoglycerate-independent phosphoglycerate mutase (510 aa).

The Mn(2+) site is built by Asp16 and Ser66. The active-site Phosphoserine intermediate is Ser66. Substrate is bound by residues His127, 156 to 157 (RD), Arg186, Arg192, 257 to 260 (RADR), and Lys333. Mn(2+) is bound by residues Asp400, His404, Asp441, His442, and His460.

The protein belongs to the BPG-independent phosphoglycerate mutase family. As to quaternary structure, monomer. The cofactor is Mn(2+).

It catalyses the reaction (2R)-2-phosphoglycerate = (2R)-3-phosphoglycerate. It functions in the pathway carbohydrate degradation; glycolysis; pyruvate from D-glyceraldehyde 3-phosphate: step 3/5. Catalyzes the interconversion of 2-phosphoglycerate and 3-phosphoglycerate. This is 2,3-bisphosphoglycerate-independent phosphoglycerate mutase from Gluconobacter oxydans (strain 621H) (Gluconobacter suboxydans).